A 69-amino-acid polypeptide reads, in one-letter code: U2-agatoxin-Ao1e (69 aa).

Positions 1-20 (MRAIISVLLISAMVFSIIEA) are cleaved as a signal peptide. A propeptide spanning residues 21 to 34 (VPLEEGLQLFEAER) is cleaved from the precursor. 3 cysteine pairs are disulfide-bonded: C37/C53, C44/C58, and C52/C68.

Belongs to the neurotoxin 01 (U2-agtx) family. In terms of tissue distribution, expressed by the venom gland.

Its subcellular location is the secreted. Insect active toxin causing rapid but reversible paralysis in crickets. No activity shown in mammals. Does not show effect on mammalian voltage-gated calcium channels. This chain is U2-agatoxin-Ao1e, found in Agelena orientalis (Funnel-web spider).